The following is a 252-amino-acid chain: MVPSERGDVATAIRPAAADKLVHGPISDKKCRKKVPRKVHKSEREKLKRGHLNDLFGELGNMLEADRQSNGKACILTDTTRILRDLLSQVKSLRQENSTLQNESNYVTMERNELQDENGALRSEISDLQNELRMRATGSPGWGHGATGSPLPVPPSPGTVFPSQQPMQPSPMTTSTVFPLQQPLPQPTVIEPSARQPLELKLFLEAPPAEDPEPSEDQEAPNNVARPQPRYPTEASSWPISLGLPRMEDEQM.

The interval 36 to 49 is basic motif; sequence PRKVHKSEREKLKR. Residues 36 to 86 form the bHLH domain; sequence PRKVHKSEREKLKRGHLNDLFGELGNMLEADRQSNGKACILTDTTRILRDL. The tract at residues 50 to 86 is helix-loop-helix motif; it reads GHLNDLFGELGNMLEADRQSNGKACILTDTTRILRDL. Positions 76 to 131 form a coiled coil; that stretch reads LTDTTRILRDLLSQVKSLRQENSTLQNESNYVTMERNELQDENGALRSEISDLQNE. The disordered stretch occupies residues 135 to 252; sequence RATGSPGWGH…GLPRMEDEQM (118 aa). Residues 162-176 are compositionally biased toward low complexity; sequence PSQQPMQPSPMTTST. Residues 208–219 show a composition bias toward acidic residues; it reads PAEDPEPSEDQE.

It belongs to the bHLH protein family.

The protein resides in the nucleus. Its function is as follows. Transcription factor that acts as a negative regulator of the iron deficiency response. Suppresses the induction of iron deficiency responsive genes, such as NAS1, NAS2, IRO2, IRT1, YSL15, and NRAMP1. The chain is Protein IRON-RELATED TRANSCRIPTION FACTOR 3 from Oryza sativa subsp. japonica (Rice).